We begin with the raw amino-acid sequence, 67 residues long: Lantibiotic Flvbeta.b (67 aa).

Positions 1 to 34 (MDNNTKLQKLYEQLAATGSEKELDAMLDENMAGA) are cleaved as a propeptide — cleaved by FlvT. Residue Ser36 is modified to 2,3-didehydroalanine (Ser); by FlvM2. Residues Thr39 and Thr43 each carry the 2,3-didehydrobutyrine; by FlvM2 modification. Cross-links (beta-methyllanthionine (Thr-Cys); by FlvM2) lie at residues 50 to 56 (TTGFDWC), 58 to 61 (TGAC), and 62 to 65 (TYSC).

Contains DL-beta-methyllanthionine, when coepressed in E.coli with the flavecin synthetase FlvM2.

It localises to the secreted. Functionally, lanthionine-containing peptide antibiotic (lantibiotic) only active on Gram-positive bacteria in synergy with Flvalpha.a. Is not active in absence of Flvalpha.a, which is encoded by the same operon than Flvbeta.b. The bactericidal activity of lantibiotics is based on depolarization of energized bacterial cytoplasmic membranes, initiated by the formation of aqueous transmembrane pores. This chain is Lantibiotic Flvbeta.b, found in Ruminococcus flavefaciens.